The following is a 711-amino-acid chain: Protein Smaug homolog 1 (711 aa).

S168 bears the Phosphoserine mark. Residues 278 to 323 (ARGPQCLPSDHAPLSPQSSVASSGSGGSEHLEDQTTARNTFQEEGS) are disordered. One can recognise an SAM domain in the interval 323-396 (SGMKDVPAWL…LKSLERDIIE (74 aa)). The residue at position 420 (S420) is a Phosphoserine. Disordered regions lie at residues 422 to 448 (STTPEVRCREPSLMESPSPDCKDSAAA) and 565 to 588 (NRGFGQSNSLPTASSVGSGMGRRN). T424 is subject to Phosphothreonine. An Omega-N-methylarginine modification is found at R566. The span at 568-581 (FGQSNSLPTASSVG) shows a compositional bias: polar residues. S573 carries the post-translational modification Phosphoserine.

This sequence belongs to the SMAUG family. In terms of tissue distribution, expressed in brain (at protein level).

The protein localises to the cytoplasm. The protein resides in the cell projection. Its subcellular location is the dendrite. It is found in the synapse. It localises to the synaptosome. Functionally, acts as a translational repressor of SRE-containing messengers. This Mus musculus (Mouse) protein is Protein Smaug homolog 1 (Samd4a).